We begin with the raw amino-acid sequence, 569 residues long: Urease subunit alpha (569 aa).

The Urease domain occupies 131 to 569 (GGFDAHIHFI…LPLAQRYFMY (439 aa)). Residues His136, His138, and Lys219 each coordinate Ni(2+). An N6-carboxylysine modification is found at Lys219. Position 221 (His221) interacts with substrate. Residues His248 and His274 each contribute to the Ni(2+) site. Residue His322 is the Proton donor of the active site. Position 362 (Asp362) interacts with Ni(2+).

Belongs to the metallo-dependent hydrolases superfamily. Urease alpha subunit family. Heterotrimer of UreA (gamma), UreB (beta) and UreC (alpha) subunits. Three heterotrimers associate to form the active enzyme. Ni cation serves as cofactor. Carboxylation allows a single lysine to coordinate two nickel ions.

The protein resides in the cytoplasm. The catalysed reaction is urea + 2 H2O + H(+) = hydrogencarbonate + 2 NH4(+). It participates in nitrogen metabolism; urea degradation; CO(2) and NH(3) from urea (urease route): step 1/1. The sequence is that of Urease subunit alpha from Jannaschia sp. (strain CCS1).